The primary structure comprises 702 residues: Epsin-1 (702 aa).

Positions 10 to 142 (NFSKGYTDTQ…EDEHALKEAR (133 aa)) constitute an ENTH domain. 2 stretches are compositionally biased toward basic and acidic residues: residues 136–160 (HALK…SSRF) and 183–192 (SRYDDDDRDH). The interval 136 to 285 (HALKEARGDS…HQREREQQEQ (150 aa)) is disordered. A compositionally biased stretch (basic residues) spans 193–214 (RSRRRSRSRRPGRSRSRRRSRR). Phosphoserine occurs at positions 212, 216, 218, and 223. UIM domains are found at residues 226 to 245 (ENDP…AEED) and 254 to 273 (DSEA…DEAR). The segment covering 230 to 248 (ELQRVIEESKRQAEEDAKR) has biased composition (basic and acidic residues). Serine 255 is subject to Phosphoserine. Residues 266-283 (SKEEDEARQRHQREREQQ) show a composition bias toward basic and acidic residues. Threonine 406 is modified (phosphothreonine). Disordered stretches follow at residues 504-589 (NHTG…RTGD) and 683-702 (PMQG…LIDL). Residues 514–534 (TGLQRQTTGYTGNNNPYSRPL) show a composition bias toward polar residues. Low complexity predominate over residues 535–549 (QSQSTGILQQQQQQS). The segment covering 557–577 (KTGSNNPFAQFSNLPSQSTAP) has biased composition (polar residues). Positions 683–695 (PMQGMQQQSMQPQ) are enriched in low complexity.

This sequence belongs to the epsin family.

It is found in the cytoplasm. It localises to the membrane. In terms of biological role, binds to membranes enriched in phosphatidylinositol 3,5-bisphosphate (PtdIns(3,5)P2) and phosphatidylinositol 4,5-bisphosphate (PtdIns(4,5)P2). Required for endocytosis and localization of actin. The chain is Epsin-1 (ent1) from Schizosaccharomyces pombe (strain 972 / ATCC 24843) (Fission yeast).